Consider the following 152-residue polypeptide: Large ribosomal subunit protein bL9 (152 aa).

Belongs to the bacterial ribosomal protein bL9 family.

Functionally, binds to the 23S rRNA. The polypeptide is Large ribosomal subunit protein bL9 (Synechocystis sp. (strain ATCC 27184 / PCC 6803 / Kazusa)).